A 375-amino-acid polypeptide reads, in one-letter code: Succinyl-diaminopimelate desuccinylase (375 aa).

Residue histidine 66 participates in Zn(2+) binding. The active site involves aspartate 68. Residue aspartate 99 coordinates Zn(2+). Glutamate 133 serves as the catalytic Proton acceptor. Zn(2+) is bound by residues glutamate 134, glutamate 162, and histidine 348.

Belongs to the peptidase M20A family. DapE subfamily. Homodimer. Requires Zn(2+) as cofactor. Co(2+) is required as a cofactor.

The enzyme catalyses N-succinyl-(2S,6S)-2,6-diaminopimelate + H2O = (2S,6S)-2,6-diaminopimelate + succinate. It participates in amino-acid biosynthesis; L-lysine biosynthesis via DAP pathway; LL-2,6-diaminopimelate from (S)-tetrahydrodipicolinate (succinylase route): step 3/3. Its function is as follows. Catalyzes the hydrolysis of N-succinyl-L,L-diaminopimelic acid (SDAP), forming succinate and LL-2,6-diaminopimelate (DAP), an intermediate involved in the bacterial biosynthesis of lysine and meso-diaminopimelic acid, an essential component of bacterial cell walls. The sequence is that of Succinyl-diaminopimelate desuccinylase from Shigella sonnei (strain Ss046).